Here is a 179-residue protein sequence, read N- to C-terminus: Large ribosomal subunit protein uL5 (179 aa).

This sequence belongs to the universal ribosomal protein uL5 family. Part of the 50S ribosomal subunit; part of the 5S rRNA/L5/L18/L25 subcomplex. Contacts the 5S rRNA and the P site tRNA. Forms a bridge to the 30S subunit in the 70S ribosome.

In terms of biological role, this is one of the proteins that bind and probably mediate the attachment of the 5S RNA into the large ribosomal subunit, where it forms part of the central protuberance. In the 70S ribosome it contacts protein S13 of the 30S subunit (bridge B1b), connecting the 2 subunits; this bridge is implicated in subunit movement. Contacts the P site tRNA; the 5S rRNA and some of its associated proteins might help stabilize positioning of ribosome-bound tRNAs. The polypeptide is Large ribosomal subunit protein uL5 (Nitrosomonas eutropha (strain DSM 101675 / C91 / Nm57)).